A 365-amino-acid chain; its full sequence is Phenoloxidase-activating factor 1 (365 aa).

Residues 1–23 (MKQVHFFILWFFVLNLYSIKAQA) form the signal peptide. One can recognise a Clip domain in the interval 24-74 (GCRTPNGENARCVPINNCKILYDSVLTSDPEVIRFLRASQCGYNGQPLVCC). 8 disulfide bridges follow: C25–C73, C35–C64, C41–C74, C101–C240, C140–C156, C184–C191, C284–C301, and C311–C340. In terms of domain architecture, Peptidase S1 spans 110-364 (ILNGDDTVPE…YRDWIEGNIR (255 aa)). N131 carries an N-linked (GlcNAc...) asparagine glycan. The Charge relay system role is filled by H155. E175, N177, T180, and D183 together coordinate Ca(2+). Residue D220 is the Charge relay system of the active site. The active-site Charge relay system is the S315.

It belongs to the peptidase S1 family. CLIP subfamily. In terms of assembly, in the active form, heterodimer of a light chain and a heavy chain; disulfide-linked. In terms of processing, cleaved following the recognition of pathogen-derived products, probably by a lysyl endopeptidase.

It localises to the secreted. Protein stability and endopeptidase activity are calcium dependent. First cleavage on prophenoloxidase PPO1 and PPO2 is not dependent on calcium; however, cleavage of PPO1 and PPO2 to their active forms is dependent on calcium and on the presence of PPAF2 and PPAF3. Cleavage of PPAF2 is inhibited by calcium. Inhibited by ethylenediaminetetraacetic acid (EDTA), p-nitrophenyl-p'-guanido-benzoate, diisopropylphosphorofluoridate (iPr2PF) and p-(Amidinophenyl)methanesulfonyl fluoride (p-APMSF). In terms of biological role, serine endopeptidase which, by cleaving prophenoloxidase PPO1 and PPO2, is required for the activation of the prophenoloxidase cascade probably following the recognition of pathogen-derived products. The sequence is that of Phenoloxidase-activating factor 1 from Holotrichia diomphalia (Korean black chafer).